A 450-amino-acid polypeptide reads, in one-letter code: Casein kinase 1-like protein 1 (450 aa).

The Protein kinase domain occupies 9 to 278 (FRLGRKIGSG…LKRIFRDLFI (270 aa)). Residues 15-23 (IGSGSFGEI) and Lys38 each bind ATP. Catalysis depends on Asp128, which acts as the Proton acceptor. The disordered stretch occupies residues 311 to 450 (AVGTSAALPP…LQVSDEHHPH (140 aa)). Residues 328–342 (YTGEEEGRPHMESSR) are compositionally biased toward basic and acidic residues. The span at 349–365 (LDNSGNISNQPTSSSAR) shows a compositional bias: polar residues. The span at 371–382 (SSSLFAQSAGSS) shows a compositional bias: low complexity.

The protein belongs to the protein kinase superfamily. CK1 Ser/Thr protein kinase family. Casein kinase I subfamily. Monomer. In terms of processing, autophosphorylated. As to expression, expressed in flowers.

Its subcellular location is the cytoplasm. The protein resides in the cell junction. The protein localises to the plasmodesma. The enzyme catalyses L-seryl-[protein] + ATP = O-phospho-L-seryl-[protein] + ADP + H(+). The catalysed reaction is L-threonyl-[protein] + ATP = O-phospho-L-threonyl-[protein] + ADP + H(+). Its function is as follows. Casein kinases are operationally defined by their preferential utilization of acidic proteins such as caseins as substrates. It can phosphorylate a large number of proteins. The polypeptide is Casein kinase 1-like protein 1 (Arabidopsis thaliana (Mouse-ear cress)).